The primary structure comprises 190 residues: Inner membrane-spanning protein YciB (190 aa).

The next 6 helical transmembrane spans lie at 3–23 (FLFD…AGIY), 24–44 (VATT…WFKH), 49–69 (AMQW…LIFH), 76–96 (WKPT…VVVV), 121–141 (LVWA…AYNF), and 149–169 (FKLF…SVWL).

Belongs to the YciB family.

It localises to the cell inner membrane. Plays a role in cell envelope biogenesis, maintenance of cell envelope integrity and membrane homeostasis. The sequence is that of Inner membrane-spanning protein YciB from Ralstonia pickettii (strain 12J).